The chain runs to 183 residues: Dual-action ribosomal maturation protein DarP (183 aa).

The protein belongs to the DarP family.

Its subcellular location is the cytoplasm. Functionally, member of a network of 50S ribosomal subunit biogenesis factors which assembles along the 30S-50S interface, preventing incorrect 23S rRNA structures from forming. Promotes peptidyl transferase center (PTC) maturation. The polypeptide is Dual-action ribosomal maturation protein DarP (Escherichia coli O81 (strain ED1a)).